The primary structure comprises 354 residues: 3-isopropylmalate dehydrogenase (354 aa).

An NAD(+)-binding site is contributed by 76 to 87 (GPRWDGAKERPE). The substrate site is built by Arg-94, Arg-104, Arg-130, and Asp-215. Mg(2+) contacts are provided by Asp-215, Asp-239, and Asp-243. Residue 273 to 285 (GSAPDIAGKNKAN) coordinates NAD(+).

Belongs to the isocitrate and isopropylmalate dehydrogenases family. LeuB type 1 subfamily. Homodimer. It depends on Mg(2+) as a cofactor. Requires Mn(2+) as cofactor.

It is found in the cytoplasm. The enzyme catalyses (2R,3S)-3-isopropylmalate + NAD(+) = 4-methyl-2-oxopentanoate + CO2 + NADH. It functions in the pathway amino-acid biosynthesis; L-leucine biosynthesis; L-leucine from 3-methyl-2-oxobutanoate: step 3/4. Catalyzes the oxidation of 3-carboxy-2-hydroxy-4-methylpentanoate (3-isopropylmalate) to 3-carboxy-4-methyl-2-oxopentanoate. The product decarboxylates to 4-methyl-2 oxopentanoate. The chain is 3-isopropylmalate dehydrogenase from Bacillus thuringiensis subsp. konkukian (strain 97-27).